The sequence spans 307 residues: DNA damage tolerance protein rad31 (307 aa).

Its function is as follows. Could be involved in a ubiquitin-related process important for DNA damage tolerance. Acts in a process which is defective in the checkpoint rad mutants and which involves hus5. The chain is DNA damage tolerance protein rad31 (rad31) from Schizosaccharomyces pombe (strain 972 / ATCC 24843) (Fission yeast).